We begin with the raw amino-acid sequence, 112 residues long: Transmembrane protein 14 homolog (112 aa).

Residues 3-23 (VDWFGYVYAATVAAGGIMGYA) form a helical membrane-spanning segment.

Belongs to the TMEM14 family.

The protein resides in the membrane. The chain is Transmembrane protein 14 homolog from Drosophila melanogaster (Fruit fly).